The primary structure comprises 58 residues: Large ribosomal subunit protein eL24 (58 aa).

C6, C9, C32, and C36 together coordinate Zn(2+). Residues 6-36 (CSFCGYDIEPGTGKMYVRRDGRVFYFCSGKC) form a C4-type zinc finger.

It belongs to the eukaryotic ribosomal protein eL24 family. As to quaternary structure, part of the 50S ribosomal subunit. Forms a cluster with proteins L3 and L14. Zn(2+) is required as a cofactor.

Functionally, binds to the 23S rRNA. The chain is Large ribosomal subunit protein eL24 from Archaeoglobus fulgidus (strain ATCC 49558 / DSM 4304 / JCM 9628 / NBRC 100126 / VC-16).